The following is a 3027-amino-acid chain: DmX-like protein 1 (3027 aa).

3 WD repeats span residues 108–145, 166–206, and 229–277; these read FLES…KPTE, KTAS…RTAV, and AHPR…NDCL. Ser-324, Ser-422, Ser-425, and Ser-436 each carry phosphoserine. A compositionally biased stretch (polar residues) spans 420 to 433; the sequence is PSSEASVEDSNQAD. The disordered stretch occupies residues 420–450; that stretch reads PSSEASVEDSNQADVKSDEETDDGVDDLKIN. One copy of the WD 4 repeat lies at 476 to 516; that stretch reads DHQIEVLLSEWSKNADMLFSIHPMDGSLLVWHVDWLDEYQP. The disordered stretch occupies residues 563–584; sequence KQKPSGLTRSTSMLISSGHNKS. Ser-574 is modified (phosphoserine). WD repeat units lie at residues 580-621, 628-665, and 848-895; these read GHNK…ESAF, SHKS…RTPD, and GKDS…IPVS. Phosphoserine occurs at positions 918 and 924. 3 WD repeats span residues 968–1010, 1134–1175, and 1211–1251; these read PSAG…GESA, SNTK…VQDQ, and GSPP…EPVI. Phosphoserine is present on residues Ser-1830, Ser-1896, Ser-1908, and Ser-1970. Disordered stretches follow at residues 2367 to 2412 and 2446 to 2468; these read PSKE…SSAP and SRAE…DDDD. Residues 2451 to 2468 are compositionally biased toward acidic residues; sequence DSEESLGSDDDDNDDDDD. WD repeat units lie at residues 2742–2783, 2785–2824, 2836–2878, 2884–2923, 2926–2965, and 2978–3016; these read KAIN…TCFR, GGNS…CPVT, CHNK…ANSL, CHDS…QRQL, SHDS…LLHT, and NIGT…SPLN.

As to expression, expressed in bone, breast, eye, foreskin, heart, parathyroid, small intestine, testis, tonsils, placenta and uterus.

This Homo sapiens (Human) protein is DmX-like protein 1 (DMXL1).